The following is a 274-amino-acid chain: Large ribosomal subunit protein uL2c (274 aa).

Disordered stretches follow at residues 1 to 22 (MAIHLYKTSTPSTRNGAVDNQV) and 225 to 274 (PVDH…RRSK).

It belongs to the universal ribosomal protein uL2 family. As to quaternary structure, part of the 50S ribosomal subunit.

The protein resides in the plastid. Its subcellular location is the chloroplast. This is Large ribosomal subunit protein uL2c (rpl2) from Silene latifolia (White campion).